The primary structure comprises 78 residues: Putative membrane protein insertion efficiency factor (78 aa).

The protein belongs to the UPF0161 family.

It localises to the cell inner membrane. Could be involved in insertion of integral membrane proteins into the membrane. The polypeptide is Putative membrane protein insertion efficiency factor (Prochlorococcus marinus (strain MIT 9301)).